Here is a 333-residue protein sequence, read N- to C-terminus: DNA-directed RNA polymerase subunit alpha (333 aa).

An alpha N-terminal domain (alpha-NTD) region spans residues 1 to 234 (MQSSVNEFLT…QQLAAFVDLK (234 aa)). The tract at residues 248-333 (IDPILLRPVD…SLKKDDKATA (86 aa)) is alpha C-terminal domain (alpha-CTD).

This sequence belongs to the RNA polymerase alpha chain family. Homodimer. The RNAP catalytic core consists of 2 alpha, 1 beta, 1 beta' and 1 omega subunit. When a sigma factor is associated with the core the holoenzyme is formed, which can initiate transcription.

The catalysed reaction is RNA(n) + a ribonucleoside 5'-triphosphate = RNA(n+1) + diphosphate. Functionally, DNA-dependent RNA polymerase catalyzes the transcription of DNA into RNA using the four ribonucleoside triphosphates as substrates. This chain is DNA-directed RNA polymerase subunit alpha, found in Pseudomonas putida (Arthrobacter siderocapsulatus).